The sequence spans 1929 residues: Intraflagellar transport protein 140 (1929 aa).

WD repeat units lie at residues 76 to 116 (QVQV…PSYK) and 119 to 158 (LHQE…YSFE). A disordered region spans residues 774-795 (LSTPDTGSPAVEAEESPQRQTR). LRR repeat units follow at residues 957 to 980 (STSL…TFTK), 1019 to 1044 (ISLL…SLAE), and 1510 to 1532 (AQSL…LADI).

The protein resides in the cell projection. It localises to the cilium. Its subcellular location is the flagellum. It is found in the cytoplasm. The protein localises to the cytoskeleton. The protein resides in the flagellum axoneme. It localises to the flagellum basal body. In terms of biological role, component of the intraflagellar transport complex A (IFT-A) involved in flagellar assembly. In Giardia intestinalis (strain ATCC 50803 / WB clone C6) (Giardia lamblia), this protein is Intraflagellar transport protein 140.